A 137-amino-acid chain; its full sequence is MPTINQLVRKPRKSKTKQSDSPVLNRGFNSKKKQFTNLNSPQKRGVCTRVGTMTPRKPNSALRKYARVRLSNNIEVNAYIPGIGHNLQEHSVVLVRGGRVKDLPGVRYHIVRGALDTSGVDGRRQGRSLYGTKKPKN.

Positions 1-57 (MPTINQLVRKPRKSKTKQSDSPVLNRGFNSKKKQFTNLNSPQKRGVCTRVGTMTPRK) are disordered. Position 102 is a 3-methylthioaspartic acid (Asp-102). Residues 118–137 (SGVDGRRQGRSLYGTKKPKN) form a disordered region.

It belongs to the universal ribosomal protein uS12 family. Part of the 30S ribosomal subunit. Contacts proteins S8 and S17. May interact with IF1 in the 30S initiation complex.

Functionally, with S4 and S5 plays an important role in translational accuracy. Its function is as follows. Interacts with and stabilizes bases of the 16S rRNA that are involved in tRNA selection in the A site and with the mRNA backbone. Located at the interface of the 30S and 50S subunits, it traverses the body of the 30S subunit contacting proteins on the other side and probably holding the rRNA structure together. The combined cluster of proteins S8, S12 and S17 appears to hold together the shoulder and platform of the 30S subunit. This chain is Small ribosomal subunit protein uS12, found in Staphylococcus epidermidis (strain ATCC 12228 / FDA PCI 1200).